The following is a 730-amino-acid chain: Semaphorin-1A (730 aa).

Residues 1-20 form the signal peptide; it reads MRAALVAVAALLWVALHAAA. The Extracellular segment spans residues 21–630; that stretch reads WVNDVSPKMY…LPIYTAETLT (610 aa). The region spanning 28–490 is the Sema domain; sequence KMYVQFGEER…SDDEILAIKL (463 aa). Residues Asn44 and Asn71 are each glycosylated (N-linked (GlcNAc...) asparagine). 2 disulfide bridges follow: Cys97-Cys107 and Cys125-Cys134. 2 N-linked (GlcNAc...) asparagine glycosylation sites follow: Asn163 and Asn267. Disulfide bonds link Cys244–Cys358 and Cys268–Cys317. An N-linked (GlcNAc...) asparagine glycan is attached at Asn360. Disulfide bonds link Cys493/Cys512 and Cys504/Cys521. Asn539 carries an N-linked (GlcNAc...) asparagine glycan. Residues 631–651 form a helical membrane-spanning segment; the sequence is IAIVTSCLGALVVGFISGFLF. Residues 652–730 are Cytoplasmic-facing; it reads SRRCRGEDYT…PIQKVKKTYI (79 aa). The segment covering 708-720 has biased composition (low complexity); sequence ANGKNANSSAENK. Positions 708-730 are disordered; sequence ANGKNANSSAENKPIQKVKKTYI.

Belongs to the semaphorin family. In terms of tissue distribution, dynamically expressed on a subset of axon pathways in the developing CNS and on circumferential bands of epithelial cells in developing limb buds.

It localises to the membrane. In terms of biological role, plays a role in growth cones guidance. The protein is Semaphorin-1A (SEMA-1A) of Schistocerca americana (American grasshopper).